The following is a 339-amino-acid chain: Methylthioribose-1-phosphate isomerase (339 aa).

Residues 52–54 (RGA), Arg-89, and Gln-188 contribute to the substrate site. Asp-229 (proton donor) is an active-site residue. Position 239–240 (239–240 (NK)) interacts with substrate.

This sequence belongs to the eIF-2B alpha/beta/delta subunits family. MtnA subfamily.

It carries out the reaction 5-(methylsulfanyl)-alpha-D-ribose 1-phosphate = 5-(methylsulfanyl)-D-ribulose 1-phosphate. It participates in amino-acid biosynthesis; L-methionine biosynthesis via salvage pathway; L-methionine from S-methyl-5-thio-alpha-D-ribose 1-phosphate: step 1/6. Catalyzes the interconversion of methylthioribose-1-phosphate (MTR-1-P) into methylthioribulose-1-phosphate (MTRu-1-P). This is Methylthioribose-1-phosphate isomerase from Anaeromyxobacter dehalogenans (strain 2CP-C).